The sequence spans 543 residues: Cysteine/serine-rich nuclear protein 2 (543 aa).

Residue methionine 1 is modified to N-acetylmethionine. 3 disordered regions span residues 1 to 51 (MDAF…SFTP), 281 to 305 (KRQVSRPAAPDEEPSPTASCSLTGA), and 488 to 543 (DCNP…PLAV). The span at 31–40 (SSDSADSCDS) shows a compositional bias: low complexity. 2 stretches are compositionally biased toward polar residues: residues 42–51 (NPPTTASFTP) and 296–305 (PTASCSLTGA).

This sequence belongs to the AXUD1 family.

The protein localises to the nucleus. Binds to the consensus sequence 5'-AGAGTG-3' and has transcriptional activator activity. May play a role in apoptosis. This is Cysteine/serine-rich nuclear protein 2 (CSRNP2) from Homo sapiens (Human).